We begin with the raw amino-acid sequence, 478 residues long: UDP-glycosyltransferase 90A1 (478 aa).

Residues Thr289, 343–345, 360–368, and 382–385 each bind UDP-alpha-D-glucose; these read VDQ, HCGWNSAQE, and MAEQ.

Belongs to the UDP-glycosyltransferase family.

This chain is UDP-glycosyltransferase 90A1 (UGT90A1), found in Arabidopsis thaliana (Mouse-ear cress).